A 1052-amino-acid chain; its full sequence is F-box/WD repeat-containing protein 10 (1052 aa).

A WD 1 repeat occupies 169 to 206; the sequence is GLNQDITDVCFSPEKDHSSKSATSQVYWTAKTQHTSLP. The 48-residue stretch at 276 to 323 folds into the F-box domain; sequence DFIRYLPIHLSKYILRMLDRHTLNKCASVSQHWAAMAQQVKMDLSAHG. WD repeat units follow at residues 409–447, 451–490, 493–532, 534–569, 572–609, and 611–652; these read SDTW…AIPV, GHAG…CTRI, GHQG…KTFR, KDPI…LVKT, GHEG…ERCL, and AFKH…KVLK. The stretch at 690 to 719 forms a coiled coil; it reads YAVEKTKQKKNKEKEEEKEENSLMEILSKC. Residues 766 to 805 are disordered; sequence LQSQGKSKSPRRDADDVEKAQKQGQLETPGKLPSHPKKKS. Residues 775–786 show a composition bias toward basic and acidic residues; sequence PRRDADDVEKAQ. The stretch at 986-1010 forms a coiled coil; sequence VLLTVKEEKEHQEAKMKEYQAREST.

Its function is as follows. Probable substrate-recognition component of a SCF (SKP1-CUL1-F-box protein)-type E3 ubiquitin ligase complex which mediates the ubiquitination and subsequent proteasomal degradation of target proteins. Overexpression is leading to degradation of CBX5 and CBX1. This chain is F-box/WD repeat-containing protein 10 (FBXW10), found in Homo sapiens (Human).